The primary structure comprises 286 residues: S-methyl-5'-thioadenosine phosphorylase (286 aa).

Phosphate-binding positions include Ser-11, 53 to 54 (RH), and 86 to 87 (SA). Residue Met-185 participates in substrate binding. Phosphate is bound at residue Thr-186. Residue 209-211 (DYD) coordinates substrate.

It belongs to the PNP/MTAP phosphorylase family. MTAP subfamily. Homohexamer. Dimer of a homotrimer.

The enzyme catalyses S-methyl-5'-thioadenosine + phosphate = 5-(methylsulfanyl)-alpha-D-ribose 1-phosphate + adenine. The protein operates within amino-acid biosynthesis; L-methionine biosynthesis via salvage pathway; S-methyl-5-thio-alpha-D-ribose 1-phosphate from S-methyl-5'-thioadenosine (phosphorylase route): step 1/1. Functionally, catalyzes the reversible phosphorylation of S-methyl-5'-thioadenosine (MTA) to adenine and 5-methylthioribose-1-phosphate. Involved in the breakdown of MTA, a major by-product of polyamine biosynthesis. Responsible for the first step in the methionine salvage pathway after MTA has been generated from S-adenosylmethionine. Has broad substrate specificity with 6-aminopurine nucleosides as preferred substrates. This Geobacter sulfurreducens (strain ATCC 51573 / DSM 12127 / PCA) protein is S-methyl-5'-thioadenosine phosphorylase.